The primary structure comprises 110 residues: Keratin, type I cytoskeletal 19 (110 aa).

Residues 1–8 form a head region; it reads FGSGGVFR. A Phosphoserine modification is found at serine 3. An IF rod domain is found at 7 to 110; that stretch reads FRITMQNLND…KLEQEIATYR (104 aa). Residue arginine 8 is modified to Omega-N-methylarginine. Residues 9–42 are coil 1A; the sequence is ITMQNLNDRLASYLDKVRALEQANGELEVKIRDW. Positions 43–45 are linker 1; the sequence is YQK. The segment at 46 to 83 is coil 1B; it reads IVLQIDNARTKFETEQALRVLDELTLARKNHEEEISAL. The coil 2 stretch occupies residues 85–110; that stretch reads ADTERQNQEYQQLMDIKLEQEIATYR. Positions 85 to 110 are necessary for interaction with PNN; that stretch reads ADTERQNQEYQQLMDIKLEQEIATYR.

Belongs to the intermediate filament family. As to quaternary structure, heterotetramer of two type I and two type II keratins. Interacts with PNN and the actin-binding domain of DMD.

Functionally, involved in the organization of myofibers. Together with KRT8, helps to link the contractile apparatus to dystrophin at the costameres of striated muscle. In Mesocricetus auratus (Golden hamster), this protein is Keratin, type I cytoskeletal 19.